We begin with the raw amino-acid sequence, 210 residues long: Ribonuclease HII (210 aa).

Positions 18-208 constitute an RNase H type-2 domain; that stretch reads YPVAGIDEAG…VNDIISQTKL (191 aa). A divalent metal cation is bound by residues Asp-24, Glu-25, and Asp-116.

It belongs to the RNase HII family. Mn(2+) serves as cofactor. The cofactor is Mg(2+).

The protein localises to the cytoplasm. It carries out the reaction Endonucleolytic cleavage to 5'-phosphomonoester.. Endonuclease that specifically degrades the RNA of RNA-DNA hybrids. This Endomicrobium trichonymphae protein is Ribonuclease HII.